The following is a 388-amino-acid chain: Succinate--CoA ligase [ADP-forming] subunit beta (388 aa).

The 236-residue stretch at lysine 9–glutamate 244 folds into the ATP-grasp domain. ATP contacts are provided by residues lysine 46, glycine 53–glycine 55, glutamate 99, threonine 102, and glutamate 107. The Mg(2+) site is built by asparagine 199 and aspartate 213. Substrate contacts are provided by residues asparagine 264 and glycine 321–valine 323.

It belongs to the succinate/malate CoA ligase beta subunit family. As to quaternary structure, heterotetramer of two alpha and two beta subunits. The cofactor is Mg(2+).

The enzyme catalyses succinate + ATP + CoA = succinyl-CoA + ADP + phosphate. The catalysed reaction is GTP + succinate + CoA = succinyl-CoA + GDP + phosphate. The protein operates within carbohydrate metabolism; tricarboxylic acid cycle; succinate from succinyl-CoA (ligase route): step 1/1. Succinyl-CoA synthetase functions in the citric acid cycle (TCA), coupling the hydrolysis of succinyl-CoA to the synthesis of either ATP or GTP and thus represents the only step of substrate-level phosphorylation in the TCA. The beta subunit provides nucleotide specificity of the enzyme and binds the substrate succinate, while the binding sites for coenzyme A and phosphate are found in the alpha subunit. This is Succinate--CoA ligase [ADP-forming] subunit beta from Marinobacter nauticus (strain ATCC 700491 / DSM 11845 / VT8) (Marinobacter aquaeolei).